The chain runs to 530 residues: Carbohydrate sulfotransferase 2 (530 aa).

Residues 1-54 (MSRSPQRALPPGALPRLLQAAPAAAPRALLPQWPRRPGRRWPASPLGMKVFRRK) are Cytoplasmic-facing. Residues 55–75 (ALVLCAGYALLLVLTMLNLLD) form a helical; Signal-anchor for type II membrane protein membrane-spanning segment. Over 76 to 530 (YKWHKEPLQQ…SKTLLRKPRL (455 aa)) the chain is Lumenal. A disordered region spans residues 89-119 (DGPLGAAAGAAGGSWGRPGPPPAGPPRAHAR). 3'-phosphoadenylyl sulfate is bound at residue 173–179 (WRSGSSF). The N-linked (GlcNAc...) asparagine glycan is linked to Asn243. 332 to 340 (RDPRAVASS) lines the 3'-phosphoadenylyl sulfate pocket. N-linked (GlcNAc...) asparagine glycosylation is found at Asn457 and Asn475.

The protein belongs to the sulfotransferase 1 family. Gal/GlcNAc/GalNAc subfamily. In terms of assembly, homodimer; disulfide-linked. Homodimerization is not essential for enzyme activity. Glycosylation at Asn-475 is required for catalytic activity. As to expression, widely expressed. Highly expressed in bone marrow, peripheral blood leukocytes, spleen, brain, spinal cord, ovary and placenta. Expressed by high endothelial cells (HEVs) and leukocytes.

Its subcellular location is the golgi apparatus. The protein resides in the trans-Golgi network membrane. The catalysed reaction is 3-O-{N-acetyl-beta-D-glucosaminyl-(1-&gt;3)-beta-D-galactosyl-(1-&gt;3)-N-acetyl-alpha-D-galactosaminyl}-L-threonyl-[protein] + 3'-phosphoadenylyl sulfate = 3-O-{6-O-sulfo-N-acetyl-beta-D-glucosaminyl-(1-&gt;3)-beta-D-galactosyl-(1-&gt;3)-N-acetyl-alpha-D-galactosaminyl}-L-threonyl-[protein] + adenosine 3',5'-bisphosphate + H(+). It catalyses the reaction 3-O-{N-acetyl-beta-D-glucosaminyl-(1-&gt;3)-beta-D-galactosyl-(1-&gt;3)-N-acetyl-alpha-D-galactosaminyl}-L-seryl-[protein] + 3'-phosphoadenylyl sulfate = 3-O-{6-O-sulfo-N-acetyl-beta-D-glucosaminyl-(1-&gt;3)-beta-D-galactosyl-(1-&gt;3)-N-acetyl-alpha-D-galactosaminyl}-L-seryl-[protein] + adenosine 3',5'-bisphosphate + H(+). It carries out the reaction a 3-O-{beta-D-galactosyl-(1-&gt;3)-[N-acetyl-beta-D-glucosaminyl-(1-&gt;6)]-N-acetyl-alpha-D-galactosaminyl}-L-threonyl-[protein] + 3'-phosphoadenylyl sulfate = 3-O-{beta-D-galactosyl-(1-&gt;3)-[6-O-sulfo-N-acetyl-beta-D-glucosaminyl-(1-&gt;6)]-N-acetyl-alpha-D-galactosaminyl}-L-threonyl-[protein] + adenosine 3',5'-bisphosphate + H(+). The enzyme catalyses 3-O-{beta-D-galactosyl-(1-&gt;3)-[N-acetyl-beta-D-glucosaminyl-(1-&gt;6)]-N-acetyl-alpha-D-galactosaminyl}-L-seryl-[protein] + 3'-phosphoadenylyl sulfate = 3-O-{beta-D-galactosyl-(1-&gt;3)-[6-O-sulfo-N-acetyl-beta-D-glucosaminyl-(1-&gt;6)]-N-acetyl-alpha-D-galactosaminyl}-L-seryl-[protein] + adenosine 3',5'-bisphosphate + H(+). The protein operates within protein modification; carbohydrate sulfation. In terms of biological role, sulfotransferase that utilizes 3'-phospho-5'-adenylyl sulfate (PAPS) as sulfonate donor to catalyze the transfer of sulfate to position 6 of non-reducing N-acetylglucosamine (GlcNAc) residues within keratan-like structures on N-linked glycans and within mucin-associated glycans that can ultimately serve as SELL ligands. SELL ligands are present in high endothelial cells (HEVs) and play a central role in lymphocyte homing at sites of inflammation. Participates in biosynthesis of the SELL ligand sialyl 6-sulfo Lewis X and in lymphocyte homing to Peyer patches. Has no activity toward O-linked sugars. Its substrate specificity may be influenced by its subcellular location. Sulfates GlcNAc residues at terminal, non-reducing ends of oligosaccharide chains. The sequence is that of Carbohydrate sulfotransferase 2 (CHST2) from Homo sapiens (Human).